We begin with the raw amino-acid sequence, 283 residues long: Elongation factor Ts (283 aa).

The interval 80 to 83 (TDFV) is involved in Mg(2+) ion dislocation from EF-Tu.

Belongs to the EF-Ts family.

It localises to the cytoplasm. In terms of biological role, associates with the EF-Tu.GDP complex and induces the exchange of GDP to GTP. It remains bound to the aminoacyl-tRNA.EF-Tu.GTP complex up to the GTP hydrolysis stage on the ribosome. The sequence is that of Elongation factor Ts from Histophilus somni (strain 129Pt) (Haemophilus somnus).